The following is a 217-amino-acid chain: MSENSLTITEILSSIRTLLVKHNKAKVTQIEKELLQAVAELEKKFKQQVQNFNELQQKIPNLQKVNEEFRLKVEKIQEEAQKKIQEKVAELTIKSKEELENAKKYVIEKSIDQPLIIIDQFEIALSYAQKDPQVKNYTTGFNMVLDAFSRWLEGFGVTKIAIEPGAQFDEKVMAALEVVPSDQPANTVVKVSKSGYKLHDKVIRFASVVVSQGNKTE.

The protein belongs to the GrpE family. As to quaternary structure, homodimer.

Its subcellular location is the cytoplasm. Participates actively in the response to hyperosmotic and heat shock by preventing the aggregation of stress-denatured proteins, in association with DnaK and GrpE. It is the nucleotide exchange factor for DnaK and may function as a thermosensor. Unfolded proteins bind initially to DnaJ; upon interaction with the DnaJ-bound protein, DnaK hydrolyzes its bound ATP, resulting in the formation of a stable complex. GrpE releases ADP from DnaK; ATP binding to DnaK triggers the release of the substrate protein, thus completing the reaction cycle. Several rounds of ATP-dependent interactions between DnaJ, DnaK and GrpE are required for fully efficient folding. In Mycoplasma pneumoniae (strain ATCC 29342 / M129 / Subtype 1) (Mycoplasmoides pneumoniae), this protein is Protein GrpE.